The primary structure comprises 1246 residues: Stromal processing peptidase, chloroplastic (1246 aa).

A chloroplast-targeting transit peptide spans 1 to 136; it reads MASFPSPPLA…AKIRRRHVLH (136 aa). Histidine 228 is a Zn(2+) binding site. The Proton acceptor role is filled by glutamate 231. A Zn(2+)-binding site is contributed by histidine 232. Residue glutamate 302 is part of the active site. Zn(2+) is bound at residue glutamate 309.

It belongs to the peptidase M16 family. Zn(2+) is required as a cofactor. Widely expressed.

The protein resides in the plastid. Its subcellular location is the chloroplast stroma. Cleaves presequences (transit peptides) from chloroplastic protein precursors. Initially recognizes a precursor by binding to the C-terminus of its transit peptide and then removes the transit peptide in a single endoproteolytic step. In a next step, pursues the cleavage of transit peptide to a subfragment form. The polypeptide is Stromal processing peptidase, chloroplastic (Oryza sativa subsp. indica (Rice)).